A 432-amino-acid polypeptide reads, in one-letter code: Hexane cyclase pydB (432 aa).

An N-terminal signal peptide occupies residues 1–20 (MMHQSLGLGLVVFVAAPVVA). 4 N-linked (GlcNAc...) asparagine glycosylation sites follow: asparagine 59, asparagine 78, asparagine 153, and asparagine 308.

It belongs to the Diels-Alderase family.

Its pathway is mycotoxin biosynthesis. In terms of biological role, hexane cyclase; part of the gene cluster that mediates the biosynthesis of pyrrocidines, fungal natural products containing a macrocyclic para-cyclophane connected to a decahydrofluorene ring system that show potent antibiotic activities toward Gram-negative bacteria. Within the pathway, pydB functions synergistically with pydE, pydX and pydZ to form the cyclophane. The pathway begins with the PKS-NRPS pydA which, with the help of the trans-enoyl reductase pydC, synthesizes the polyketide-tyrosyl acyl thioester product which can be reductively off-loaded by the terminal reductase (R) domain in pydA. The alpha/beta hydrolase pydG is then required to catalyze the subsequent Knoevenagel condensation that affords the 3-pyrrolin-2-one ring, whereas the four proteins pydB, pydE, pydX and pydZ then function synergistically to form the cyclophane. PydB and the membrane-bound pydX and pydZ are lipid-binding proteins that can sequester and mold the pdyG product into the inverse S-shape. Binding of the medium chain reductase pydE to the complex would trigger the cascade oxidative cyclization. PydY is involved the Diels-Alder cycloaddition that forms the decahydrofluorene core. Additional non-enzymatic hydroxylation yields pyrrocidine A2 which can be further reduced into pyrrocidine B by an endogenous reductase. The chain is Hexane cyclase pydB from Acremonium sp.